A 345-amino-acid chain; its full sequence is UDP-N-acetylenolpyruvoylglucosamine reductase (345 aa).

The region spanning 27–197 (FDASAELAYE…TKVVFKLPKQ (171 aa)) is the FAD-binding PCMH-type domain. The active site involves arginine 174. The Proton donor role is filled by serine 245. Glutamate 341 is a catalytic residue.

The protein belongs to the MurB family. FAD is required as a cofactor.

Its subcellular location is the cytoplasm. It catalyses the reaction UDP-N-acetyl-alpha-D-muramate + NADP(+) = UDP-N-acetyl-3-O-(1-carboxyvinyl)-alpha-D-glucosamine + NADPH + H(+). It functions in the pathway cell wall biogenesis; peptidoglycan biosynthesis. Cell wall formation. The sequence is that of UDP-N-acetylenolpyruvoylglucosamine reductase from Polynucleobacter asymbioticus (strain DSM 18221 / CIP 109841 / QLW-P1DMWA-1) (Polynucleobacter necessarius subsp. asymbioticus).